Consider the following 167-residue polypeptide: Endoribonuclease YbeY (167 aa).

The Zn(2+) site is built by His132, His136, and His142.

The protein belongs to the endoribonuclease YbeY family. Requires Zn(2+) as cofactor.

The protein resides in the cytoplasm. Single strand-specific metallo-endoribonuclease involved in late-stage 70S ribosome quality control and in maturation of the 3' terminus of the 16S rRNA. This chain is Endoribonuclease YbeY, found in Clostridium beijerinckii (strain ATCC 51743 / NCIMB 8052) (Clostridium acetobutylicum).